The sequence spans 484 residues: Probable D-lactate dehydrogenase, mitochondrial (484 aa).

The N-terminal 52 residues, 1–52 (MAMLLRVATQRLSPWRSFCSRGSQGGLSQDFVEALKAVVGSPHVSTASAVRE), are a transit peptide targeting the mitochondrion. N6-acetyllysine is present on K36. An FAD-binding PCMH-type domain is found at 62 to 242 (RCQPPDAVVW…TSTTLRLHPA (181 aa)). K292 is subject to N6-acetyllysine. At K335 the chain carries N6-acetyllysine; alternate. K335 bears the N6-succinyllysine; alternate mark. N6-acetyllysine is present on residues K422 and K449.

Belongs to the FAD-binding oxidoreductase/transferase type 4 family. In terms of assembly, interacts with CSRP3. FAD is required as a cofactor. In terms of tissue distribution, readily detected in liver and kidney, with a weaker signal observed in heart, skeletal muscle, stomach, brain, and lung.

Its subcellular location is the mitochondrion. The enzyme catalyses (R)-lactate + 2 Fe(III)-[cytochrome c] = 2 Fe(II)-[cytochrome c] + pyruvate + 2 H(+). In terms of biological role, involved in D-lactate, but not L-lactate catabolic process. This Mus musculus (Mouse) protein is Probable D-lactate dehydrogenase, mitochondrial.